We begin with the raw amino-acid sequence, 250 residues long: Large ribosomal subunit protein uL4 (250 aa).

Disordered stretches follow at residues 1 to 20 (MQVT…DLPR) and 51 to 101 (YAGL…HGLD). The span at 92 to 101 (PKAEKDHGLD) shows a compositional bias: basic and acidic residues.

The protein belongs to the universal ribosomal protein uL4 family. In terms of assembly, part of the 50S ribosomal subunit.

Functionally, one of the primary rRNA binding proteins, this protein initially binds near the 5'-end of the 23S rRNA. It is important during the early stages of 50S assembly. It makes multiple contacts with different domains of the 23S rRNA in the assembled 50S subunit and ribosome. In terms of biological role, forms part of the polypeptide exit tunnel. The polypeptide is Large ribosomal subunit protein uL4 (Halobacterium salinarum (strain ATCC 29341 / DSM 671 / R1)).